Reading from the N-terminus, the 67-residue chain is Beta-defensin 103 (67 aa).

Residues Met-1 to Gly-22 form the signal peptide. Disulfide bonds link Cys-33/Cys-62, Cys-40/Cys-55, and Cys-45/Cys-63.

Highly expressed in skin and tonsils, and to a lesser extent in trachea, uterus, kidney, thymus, adenoid, pharynx and tongue. Low expression in salivary gland, bone marrow, colon, stomach, polyp and larynx. No expression in small intestine.

It localises to the secreted. In terms of biological role, exhibits antimicrobial activity against Gram-positive bacteria S.aureus and S.pyogenes, Gram-negative bacteria P.aeruginosa and E.coli and the yeast C.albicans. Kills multiresistant S.aureus and vancomycin-resistant E.faecium. No significant hemolytic activity was observed. The polypeptide is Beta-defensin 103 (DEFB103A) (Homo sapiens (Human)).